The sequence spans 651 residues: Acetyl-coenzyme A synthetase (651 aa).

CoA is bound by residues 191-194 (RGGK), Thr311, and Asn335. Residues 387–389 (GEP), 411–416 (DTWWQT), Asp500, and Arg515 each bind ATP. Position 523 (Ser523) interacts with CoA. Position 526 (Arg526) interacts with ATP. The Mg(2+) site is built by Val537, His539, and Val542. Residue Arg584 coordinates CoA. Lys609 carries the N6-acetyllysine modification.

The protein belongs to the ATP-dependent AMP-binding enzyme family. Mg(2+) is required as a cofactor. Post-translationally, acetylated. Deacetylation by the SIR2-homolog deacetylase activates the enzyme.

The catalysed reaction is acetate + ATP + CoA = acetyl-CoA + AMP + diphosphate. Its function is as follows. Catalyzes the conversion of acetate into acetyl-CoA (AcCoA), an essential intermediate at the junction of anabolic and catabolic pathways. AcsA undergoes a two-step reaction. In the first half reaction, AcsA combines acetate with ATP to form acetyl-adenylate (AcAMP) intermediate. In the second half reaction, it can then transfer the acetyl group from AcAMP to the sulfhydryl group of CoA, forming the product AcCoA. In Pseudomonas syringae pv. syringae (strain B728a), this protein is Acetyl-coenzyme A synthetase.